We begin with the raw amino-acid sequence, 71 residues long: Small ribosomal subunit protein bS21 (71 aa).

The protein belongs to the bacterial ribosomal protein bS21 family.

The protein is Small ribosomal subunit protein bS21 of Acidithiobacillus ferrooxidans (strain ATCC 23270 / DSM 14882 / CIP 104768 / NCIMB 8455) (Ferrobacillus ferrooxidans (strain ATCC 23270)).